The following is a 795-amino-acid chain: uncharacterized protein (795 aa).

Positions 228–280 (NIICFKNKCKNNEKEKKEEEEDHDHDHDDKKKEKEDKEKEEEEEEEDSNDDFE) form a coiled coil. Disordered regions lie at residues 242–278 (EKKE…SNDD), 326–430 (TTTT…TPNR), 455–484 (INQQ…KSEP), and 673–743 (NNNN…NENE). Residues 251–264 (DHDHDDKKKEKEDK) show a composition bias toward basic and acidic residues. Positions 265 to 278 (EKEEEEEEEDSNDD) are enriched in acidic residues. The segment covering 326–345 (TTTTTVNGSKNSSNTTTPIT) has biased composition (low complexity). Over residues 362–373 (DDDDDDDLTDED) the composition is skewed to acidic residues. The segment covering 377 to 398 (HNEIYSTSPKVSHSTFCQSSPT) has biased composition (polar residues). 3 stretches are compositionally biased toward low complexity: residues 399–414 (LLDL…QQQQ), 455–480 (INQQ…SSNI), and 673–729 (NNNN…NQNE). The span at 732–743 (NENKNENENENE) shows a compositional bias: basic and acidic residues.

This is an uncharacterized protein from Dictyostelium discoideum (Social amoeba).